Reading from the N-terminus, the 340-residue chain is Uroporphyrinogen decarboxylase (340 aa).

Residues 21–25, D71, Y148, S203, and H316 each bind substrate; that span reads RQAGR.

Belongs to the uroporphyrinogen decarboxylase family. In terms of assembly, homodimer.

The protein resides in the cytoplasm. The catalysed reaction is uroporphyrinogen III + 4 H(+) = coproporphyrinogen III + 4 CO2. It functions in the pathway porphyrin-containing compound metabolism; protoporphyrin-IX biosynthesis; coproporphyrinogen-III from 5-aminolevulinate: step 4/4. In terms of biological role, catalyzes the decarboxylation of four acetate groups of uroporphyrinogen-III to yield coproporphyrinogen-III. This chain is Uroporphyrinogen decarboxylase, found in Campylobacter jejuni (strain RM1221).